The chain runs to 327 residues: Arabinose 5-phosphate isomerase KdsD (327 aa).

Residues 41 to 183 enclose the SIS domain; that stretch reads ILENNRDKSR…AIALLKAKNF (143 aa). Substrate-binding positions include 74–75, H81, H87, 113–122, 147–149, T221, and E273; these read GT, GLLPMIKHLD, and HVD. H81 contributes to the Zn(2+) binding site. Positions 209–268 constitute a CBS 1 domain; sequence MRKGNEIPIVKPTDNIRKAILEISDKGVGNTLVAENNTLLGIFTDGDLRRMFEAESFNSQ. The CBS 2 domain occupies 275 to 327; it reads MTKNPKSISKEEMAITALEKMEKYEITSLAVVDNGHNILGIVTMHDLIKLELR.

It belongs to the SIS family. GutQ/KpsF subfamily. In terms of assembly, homotetramer.

It carries out the reaction D-arabinose 5-phosphate = D-ribulose 5-phosphate. The protein operates within carbohydrate biosynthesis; 3-deoxy-D-manno-octulosonate biosynthesis; 3-deoxy-D-manno-octulosonate from D-ribulose 5-phosphate: step 1/3. It participates in bacterial outer membrane biogenesis; lipopolysaccharide biosynthesis. Inhibited by hydroxamates, mimicking the putative enediol reaction intermediate. Most potent inhibition, with an IC(50) of 0.7 uM, is obtained with the 4 carbon-based hydroxamate containing acetyl moieties. In terms of biological role, involved in the biosynthesis of 3-deoxy-D-manno-octulosonate (KDO), a unique 8-carbon sugar component of lipopolysaccharides (LPSs). Catalyzes the reversible aldol-ketol isomerization between D-ribulose 5-phosphate (Ru5P) and D-arabinose 5-phosphate (A5P). The sequence is that of Arabinose 5-phosphate isomerase KdsD (kdsD) from Francisella tularensis subsp. tularensis (strain SCHU S4 / Schu 4).